Here is a 340-residue protein sequence, read N- to C-terminus: Glutaminase 2 (340 aa).

Ser-89, Asn-140, Asn-191, Tyr-215, and Tyr-267 together coordinate substrate.

The protein belongs to the glutaminase family. Homotetramer.

The enzyme catalyses L-glutamine + H2O = L-glutamate + NH4(+). The sequence is that of Glutaminase 2 from Yersinia pestis.